An 876-amino-acid chain; its full sequence is Alanine--tRNA ligase (876 aa).

The Zn(2+) site is built by H568, H572, C670, and H674.

This sequence belongs to the class-II aminoacyl-tRNA synthetase family. Zn(2+) serves as cofactor.

It is found in the cytoplasm. The catalysed reaction is tRNA(Ala) + L-alanine + ATP = L-alanyl-tRNA(Ala) + AMP + diphosphate. In terms of biological role, catalyzes the attachment of alanine to tRNA(Ala) in a two-step reaction: alanine is first activated by ATP to form Ala-AMP and then transferred to the acceptor end of tRNA(Ala). Also edits incorrectly charged Ser-tRNA(Ala) and Gly-tRNA(Ala) via its editing domain. In Anaplasma phagocytophilum (strain HZ), this protein is Alanine--tRNA ligase.